Here is a 274-residue protein sequence, read N- to C-terminus: Undecaprenyl-diphosphatase 1 (274 aa).

The next 8 membrane-spanning stretches (helical) occupy residues 7–27 (LEIF…WLPV), 48–68 (FIST…LVIF), 88–108 (VRLW…GILF), 115–135 (LFFN…IMIG), 151–171 (VTYK…IPGT), 189–209 (YVAA…ASAL), 221–241 (FEWL…IVVI), and 253–273 (FKVF…YFFL).

This sequence belongs to the UppP family.

Its subcellular location is the cell membrane. It carries out the reaction di-trans,octa-cis-undecaprenyl diphosphate + H2O = di-trans,octa-cis-undecaprenyl phosphate + phosphate + H(+). Functionally, catalyzes the dephosphorylation of undecaprenyl diphosphate (UPP). Confers resistance to bacitracin. The polypeptide is Undecaprenyl-diphosphatase 1 (Clostridioides difficile (strain 630) (Peptoclostridium difficile)).